The primary structure comprises 60 residues: Hemocyte defensin Cg-Defh2 (60 aa).

The first 17 residues, 1–17 (LLTLAVLLMVSADMAFA), serve as a signal peptide directing secretion. Phe19, Gly20, and Cys21 together coordinate beta-D-GlcNAc-(1-&gt;4)-Mur2Ac(oyl-L-Ala-gamma-D-Glu-L-Lys-D-Ala-D-Ala)-di-trans,octa-cis-undecaprenyl diphosphate. 4 disulfide bridges follow: Cys21/Cys42, Cys28/Cys51, Cys32/Cys53, and Cys37/Cys56. The interval 22–25 (PGDQ) is binds to membrane interface. His31 is a beta-D-GlcNAc-(1-&gt;4)-Mur2Ac(oyl-L-Ala-gamma-D-Glu-L-Lys-D-Ala-D-Ala)-di-trans,octa-cis-undecaprenyl diphosphate binding site. The tract at residues 43 to 49 (DAVTLWL) is binds to membrane interface. Cys51 contributes to the beta-D-GlcNAc-(1-&gt;4)-Mur2Ac(oyl-L-Ala-gamma-D-Glu-L-Lys-D-Ala-D-Ala)-di-trans,octa-cis-undecaprenyl diphosphate binding site.

The protein belongs to the invertebrate defensin family. As to expression, expressed in hemocytes.

Its subcellular location is the secreted. It localises to the target cell membrane. In terms of biological role, antibacterial peptide mostly active against Gram-positive bacteria. It acts by selectively inhibiting peptidoglycan biosynthesis through complex formation with the cell wall precursor lipid II (1:1 molar ratio) thus inhibiting cell wall synthesis. It does not disrupt cell membranes. Is noticeably more potent than Cg-Defh1. The protein is Hemocyte defensin Cg-Defh2 of Magallana gigas (Pacific oyster).